Consider the following 387-residue polypeptide: Probable peptidoglycan glycosyltransferase FtsW (387 aa).

9 helical membrane-spanning segments follow: residues 19-39, 61-81, 86-106, 118-138, 161-181, 199-219, 286-306, 320-340, and 352-372; these read LDFS…VMVA, ITFL…PMSV, SGLL…PGIG, LGPF…VYFA, VLLI…SVVI, FLLL…ASPY, FIGA…LVIL, YVVF…MGVA, and PFIS…ALVF.

This sequence belongs to the SEDS family. FtsW subfamily.

Its subcellular location is the cell inner membrane. The catalysed reaction is [GlcNAc-(1-&gt;4)-Mur2Ac(oyl-L-Ala-gamma-D-Glu-L-Lys-D-Ala-D-Ala)](n)-di-trans,octa-cis-undecaprenyl diphosphate + beta-D-GlcNAc-(1-&gt;4)-Mur2Ac(oyl-L-Ala-gamma-D-Glu-L-Lys-D-Ala-D-Ala)-di-trans,octa-cis-undecaprenyl diphosphate = [GlcNAc-(1-&gt;4)-Mur2Ac(oyl-L-Ala-gamma-D-Glu-L-Lys-D-Ala-D-Ala)](n+1)-di-trans,octa-cis-undecaprenyl diphosphate + di-trans,octa-cis-undecaprenyl diphosphate + H(+). Its pathway is cell wall biogenesis; peptidoglycan biosynthesis. Its function is as follows. Peptidoglycan polymerase that is essential for cell division. This is Probable peptidoglycan glycosyltransferase FtsW from Saccharophagus degradans (strain 2-40 / ATCC 43961 / DSM 17024).